A 180-amino-acid polypeptide reads, in one-letter code: Large ribosomal subunit protein uL6 (180 aa).

The protein belongs to the universal ribosomal protein uL6 family. Part of the 50S ribosomal subunit.

Functionally, this protein binds to the 23S rRNA, and is important in its secondary structure. It is located near the subunit interface in the base of the L7/L12 stalk, and near the tRNA binding site of the peptidyltransferase center. The chain is Large ribosomal subunit protein uL6 from Caldanaerobacter subterraneus subsp. tengcongensis (strain DSM 15242 / JCM 11007 / NBRC 100824 / MB4) (Thermoanaerobacter tengcongensis).